A 273-amino-acid polypeptide reads, in one-letter code: Proteasome subunit beta type-5-B (273 aa).

A propeptide spans 1–57 (MKLDTSGLETTMPVIGFGSNSEMLDGFSSAPSFDLPRTTDFDGFQKKAVEMVKPAKG) (removed in mature form). Residue T58 is the Nucleophile of the active site.

This sequence belongs to the peptidase T1B family. Component of the 20S core complex of the 26S proteasome. The 26S proteasome is composed of a core protease (CP), known as the 20S proteasome, capped at one or both ends by the 19S regulatory particle (RP/PA700). The 20S proteasome core is composed of 28 subunits that are arranged in four stacked rings, resulting in a barrel-shaped structure. The two end rings are each formed by seven alpha subunits, and the two central rings are each formed by seven beta subunits. The catalytic chamber with the active sites is on the inside of the barrel.

The protein resides in the cytoplasm. The protein localises to the nucleus. It catalyses the reaction Cleavage of peptide bonds with very broad specificity.. Its function is as follows. The proteasome is a multicatalytic proteinase complex which is characterized by its ability to cleave peptides with Arg, Phe, Tyr, Leu, and Glu adjacent to the leaving group at neutral or slightly basic pH. The proteasome has an ATP-dependent proteolytic activity. The protein is Proteasome subunit beta type-5-B (PBE2) of Arabidopsis thaliana (Mouse-ear cress).